The sequence spans 269 residues: Ribosomal RNA small subunit methyltransferase J (269 aa).

Residues 125–126 and Asp179 contribute to the S-adenosyl-L-methionine site; that span reads ER.

It belongs to the methyltransferase superfamily. RsmJ family.

It localises to the cytoplasm. The catalysed reaction is guanosine(1516) in 16S rRNA + S-adenosyl-L-methionine = N(2)-methylguanosine(1516) in 16S rRNA + S-adenosyl-L-homocysteine + H(+). Specifically methylates the guanosine in position 1516 of 16S rRNA. This chain is Ribosomal RNA small subunit methyltransferase J, found in Pseudomonas syringae pv. syringae (strain B728a).